Here is a 559-residue protein sequence, read N- to C-terminus: Fanconi-associated nuclease 1 homolog (559 aa).

Positions 386, 507, 522, and 523 each coordinate Mn(2+). Residues 443–555 enclose the VRR-NUC domain; the sequence is DGSYRDAIRC…MPVAVCYVRW (113 aa).

The protein belongs to the FAN1 family. Requires Mn(2+) as cofactor. Mg(2+) serves as cofactor.

It catalyses the reaction Hydrolytically removes 5'-nucleotides successively from the 3'-hydroxy termini of 3'-hydroxy-terminated oligonucleotides.. Its function is as follows. Nuclease required for the repair of DNA interstrand cross-links (ICL). Acts as a 5'-3' exonuclease that anchors at a cut end of DNA and cleaves DNA successively at every third nucleotide, allowing to excise an ICL from one strand through flanking incisions. Also has endonuclease activity toward 5'-flaps. This is Fanconi-associated nuclease 1 homolog from Pseudomonas aeruginosa (strain ATCC 15692 / DSM 22644 / CIP 104116 / JCM 14847 / LMG 12228 / 1C / PRS 101 / PAO1).